Reading from the N-terminus, the 158-residue chain is MNVVQGNIESKNAKVAIVVSRFNSFVVDSLLNGAVDTLKRFGQVADENITVVKVPGAVELPLAARRVAACGKFDGIIALGAVIRGGTPHFDFVAGECNKGLAQVALEFDIPVSFGVLTTDTIEQAIERSGTKAGNKGGEAALGLLEMVNVLQALEEQL.

Residues Phe-22, 57–59, and 81–83 contribute to the 5-amino-6-(D-ribitylamino)uracil site; these read AVE and AVI. A (2S)-2-hydroxy-3-oxobutyl phosphate-binding site is contributed by 86 to 87; sequence GT. The Proton donor role is filled by His-89. Phe-114 serves as a coordination point for 5-amino-6-(D-ribitylamino)uracil. Arg-128 serves as a coordination point for (2S)-2-hydroxy-3-oxobutyl phosphate.

This sequence belongs to the DMRL synthase family. Forms an icosahedral capsid composed of 60 subunits, arranged as a dodecamer of pentamers.

It catalyses the reaction (2S)-2-hydroxy-3-oxobutyl phosphate + 5-amino-6-(D-ribitylamino)uracil = 6,7-dimethyl-8-(1-D-ribityl)lumazine + phosphate + 2 H2O + H(+). Its pathway is cofactor biosynthesis; riboflavin biosynthesis; riboflavin from 2-hydroxy-3-oxobutyl phosphate and 5-amino-6-(D-ribitylamino)uracil: step 1/2. In terms of biological role, catalyzes the formation of 6,7-dimethyl-8-ribityllumazine by condensation of 5-amino-6-(D-ribitylamino)uracil with 3,4-dihydroxy-2-butanone 4-phosphate. This is the penultimate step in the biosynthesis of riboflavin. This chain is 6,7-dimethyl-8-ribityllumazine synthase, found in Shewanella halifaxensis (strain HAW-EB4).